Consider the following 306-residue polypeptide: Pantothenate kinase (306 aa).

91 to 98 (GSVAVGKS) contributes to the ATP binding site.

It belongs to the prokaryotic pantothenate kinase family.

The protein resides in the cytoplasm. The enzyme catalyses (R)-pantothenate + ATP = (R)-4'-phosphopantothenate + ADP + H(+). The protein operates within cofactor biosynthesis; coenzyme A biosynthesis; CoA from (R)-pantothenate: step 1/5. The sequence is that of Pantothenate kinase from Streptococcus equi subsp. zooepidemicus (strain H70).